We begin with the raw amino-acid sequence, 639 residues long: Chaperone protein DnaK (639 aa).

T198 is modified (phosphothreonine; by autocatalysis). Residues 602 to 639 (QAKSQAQGGDNADAGKQANATADDVVDAEFEEVKDDKK) form a disordered region. The segment covering 625–639 (DVVDAEFEEVKDDKK) has biased composition (acidic residues).

It belongs to the heat shock protein 70 family.

Functionally, acts as a chaperone. This Shewanella baltica (strain OS195) protein is Chaperone protein DnaK.